The sequence spans 552 residues: Cytochrome P450 monooxyhenase eriI (552 aa).

A helical transmembrane segment spans residues 9–26; sequence FALKASAAVAVLLLAAWV. Residues Asn-50 and Asn-447 are each glycosylated (N-linked (GlcNAc...) asparagine). Cys-495 provides a ligand contact to heme.

This sequence belongs to the cytochrome P450 family. Requires heme as cofactor.

The protein resides in the membrane. The catalysed reaction is (-)-cyatha-3,12-diene + reduced [NADPH--hemoprotein reductase] + O2 = erinacol + oxidized [NADPH--hemoprotein reductase] + H2O + H(+). The protein operates within secondary metabolite biosynthesis. Cytochrome P450 monooxygenase; part of the gene cluster that mediates the biosynthesis of erinacines, cyathane-xylosides that show unique biological activities, including leishmanicidal activity, stimulating activity for nerve growth-factor synthesis, and agonistic activity toward the kappa opioid receptor. Within the pathway, eriI hydroxylates cyatha-3,12-diene at C-14 of the seven-membered ring to yield erinacol. The first step of the erinacines biosynthesis pathway is catalyzed by the geranylgeranyl diphosphate (GGPP) synthase eriE via conversion of farnesyl pyrophosphate and isopentyl pyrophosphate into geranylgeranyl pyrophosphate (GGPP). GGPP is then substrate of the diterpene cyclase eriG for the production of cyatha-3,12-diene. The cytochrome P450 monooxygenase eriI then hydroxylates cyatha-3,12-diene at C-14 of the seven-membered ring to produce erinacol, which is further hydroxylated at C-15 by the cytochrome P450 monooxygenase eriC to yield cyathadiol. The cytochrome P450 monooxygenase eriA then catalyzes C-11 hydroxylation in the presence of the short chain dehydrogenase/reductase (SDR) eriH, which leads to the production of cyathatriol. The acetyltransferase eriL converts cyathatriol into 11-O-acetyl-cyathatriol. The SDR eriH catalyzes further oxidation of 11-O-acetyl-cyathatriol into 1-O-acetylcyathin A3. Finally, the glycosyl transferase eriJ tranfers xylose from UDP-xylose onto C-14 of 11-O-acetyl-cyathatriol to form eracine Q. EriJ is also able to convert 11-O-acetyl-cyathatriol to eracine Q2 by using UDP-D-glucose as cosubstrate, but at a lower rate. Its function is as follows. Cytochrome P450 monooxygenase; part of the gene cluster that mediates the biosynthesis of erinacines, cyathane-xylosides that show unique biological activities, including leishmanicidal activity, stimulating activity for nerve growth-factor synthesis, and agonistic activity toward the kappa opioid receptor. The geranylgeranyl diphosphate (GGPP) synthase eriE catalyzes the first step in erinacines biosynthesis via conversion of farnesyl pyrophosphate and isopentyl pyrophosphate into geranylgeranyl pyrophosphate (GGPP). GGPP is then substrate of the diterpene cyclase eriG for the production of cyatha-3,12-diene. EriG is unable to use geranyl diphosphate (GPP) or farnesyl diphosphate (FPP) as substrates. The cytochrome P450 monooxygenase eriI then hydroxylates cyatha-3,12-diene at C-14 of the seven-membered ring to produce erinacol, which is further hydroxylated at C-15 by the cytochrome P450 monooxygenase eriC to yield cyathadiol. The cytochrome P450 monooxygenase eriA then catalyzes C-11 hydroxylation in the presence of the short chain dehydrogenase/reductase (SDR) eriH, which leads to the production of cyathatriol. The acetyltransferase eriL converts cyathatriol into 11-O-acetyl-cyathatriol. The SDR eriH catalyzes further oxidation of 11-O-acetyl-cyathatriol into 1-O-acetylcyathin A3. Finally, the glycosyl transferase eriJ tranfers xylose from UDP-xylose onto C-14 of 11-O-acetyl-cyathatriol to form eracine Q. EriJ is also able to convert 11-O-acetyl-cyathatriol to eracine Q2 by using UDP-D-glucose as cosubstrate, but at a lower rate. In the absence of eriL and eriJ, the SDR eriH is able to convert cyathatriol to cyathin A3; this is likely a switching mechanism in the biosynthesis of cyathins (C-14 ketogroup)and erinacines (C-14 glycosylated group). The roles of the SDR eriB, the polyprenyl transferase eriF and the dehydrogenase eriK have still to be identified. The polypeptide is Cytochrome P450 monooxyhenase eriI (Hericium erinaceus (Lion's mane mushroom)).